Here is a 217-residue protein sequence, read N- to C-terminus: Cytidylate kinase (217 aa).

9 to 17 (GPAGSGKTT) serves as a coordination point for ATP.

This sequence belongs to the cytidylate kinase family. Type 1 subfamily.

It is found in the cytoplasm. The enzyme catalyses CMP + ATP = CDP + ADP. The catalysed reaction is dCMP + ATP = dCDP + ADP. This is Cytidylate kinase from Thermosipho melanesiensis (strain DSM 12029 / CIP 104789 / BI429).